Reading from the N-terminus, the 182-residue chain is Ribosome maturation factor RimM (182 aa).

The PRC barrel domain occupies 102-182 (EEGDYYWKDL…TIEVDWDPGF (81 aa)).

It belongs to the RimM family. As to quaternary structure, binds ribosomal protein uS19.

The protein resides in the cytoplasm. An accessory protein needed during the final step in the assembly of 30S ribosomal subunit, possibly for assembly of the head region. Essential for efficient processing of 16S rRNA. May be needed both before and after RbfA during the maturation of 16S rRNA. It has affinity for free ribosomal 30S subunits but not for 70S ribosomes. This is Ribosome maturation factor RimM from Salmonella enteritidis PT4 (strain P125109).